A 452-amino-acid polypeptide reads, in one-letter code: MGRRYFGTDGIRGKVGDAPITPDFVLRLGYAAGKVLASAPGRAASGARPTVLIGKDTRVSGYMLEAALEAGFSAAGVDVMLAGPMPTPGVAYLTRALRLSAGVVISASHNPYHDNGIKFFSADGNKLPDEIEAKIEAWLDKPLDCAASDGLGKARRLDDAAGRYIEFCKSTFPAAFDLRGMKLVVDCAHGAAYQVAPHVFHELGADVIPIGVAPNGFNINDGVGATAPDALMRAVRANHADLGIALDGDADRLLVVDHTGRLYNGDELLYVLVKDRIATNGQVEGAVGTLMTNFAVEVALKEAGVQFVRAAVGDRYVLEQLRERGWQLGAEGSGHILSLDRHSTGDGIVSALLVLAALKRSGKTLAQMLEGVTLFPQKLINVRMKPGADWKGSEAIRRAIDSAEQALSGSGRVLIRASGTEPVLRVMVEARQATDANRHAEAIADAVKQATA.

Catalysis depends on serine 108, which acts as the Phosphoserine intermediate. Residues serine 108, aspartate 247, aspartate 249, and aspartate 251 each contribute to the Mg(2+) site. A Phosphoserine modification is found at serine 108.

The protein belongs to the phosphohexose mutase family. The cofactor is Mg(2+). Activated by phosphorylation.

It catalyses the reaction alpha-D-glucosamine 1-phosphate = D-glucosamine 6-phosphate. Functionally, catalyzes the conversion of glucosamine-6-phosphate to glucosamine-1-phosphate. The sequence is that of Phosphoglucosamine mutase from Burkholderia pseudomallei (strain 668).